Here is a 248-residue protein sequence, read N- to C-terminus: Chromatin target of PRMT1 protein (248 aa).

Residue Ala2 is modified to N-acetylalanine. 3 positions are modified to phosphoserine: Ser40, Ser49, and Ser64. Residue Lys70 forms a Glycyl lysine isopeptide (Lys-Gly) (interchain with G-Cter in SUMO2) linkage. Residues 151–204 (LRRGGVRGRGGPGRGGLGRGAMGRGGIGGRGRGMIGRGRGGFGGRGRGRGRGRG) form a disordered region. Residues 153–206 (RGGVRGRGGPGRGGLGRGAMGRGGIGGRGRGMIGRGRGGFGGRGRGRGRGRGAL) form an interaction with PRMT1 region. A compositionally biased stretch (gly residues) spans 157–195 (RGRGGPGRGGLGRGAMGRGGIGGRGRGMIGRGRGGFGGR). Positions 194–203 (GRGRGRGRGR) match the GAR motif; involved in 5hmC binding motif. At Thr242 the chain carries Phosphothreonine.

Interacts with PRMT1 and PRMT5. Interacts with the 5FMC complex; the interaction is methylation-dependent. Interacts with FYTTD1, SET and PRC1 complex members CBX4, RNF2 and PHC2; the interactions are methylation-independent. Interacts with ZNF148. Interacts with WDR77 and ER. Post-translationally, asymmetrically methylated by PRMT1. Symmetrically methylated by PRMT5.

The protein localises to the nucleus. Its subcellular location is the nucleolus. The protein resides in the nucleoplasm. It is found in the nucleus speckle. Its function is as follows. Plays an important role in the ligand-dependent activation of estrogen receptor target genes. May play a role in the silencing of fetal globin genes. Recruits the 5FMC complex to ZNF148, leading to desumoylation of ZNF148 and subsequent transactivation of ZNF148 target genes. Required for the tumorigenicity of glioblastoma cells. Binds to 5-hydroxymethylcytosine (5hmC) and associates with the methylosome complex containing PRMT1, PRMT5, MEP50 and ERH. The CHTOP-methylosome complex associated with 5hmC methylates H4R3 and transactivates genes involved in glioblastomagenesis. This Bos taurus (Bovine) protein is Chromatin target of PRMT1 protein (CHTOP).